Consider the following 187-residue polypeptide: Elongation factor P (187 aa).

Belongs to the elongation factor P family.

It localises to the cytoplasm. It participates in protein biosynthesis; polypeptide chain elongation. In terms of biological role, involved in peptide bond synthesis. Stimulates efficient translation and peptide-bond synthesis on native or reconstituted 70S ribosomes in vitro. Probably functions indirectly by altering the affinity of the ribosome for aminoacyl-tRNA, thus increasing their reactivity as acceptors for peptidyl transferase. This chain is Elongation factor P, found in Parafrankia sp. (strain EAN1pec).